The following is a 188-amino-acid chain: UPF0301 protein XAC2918 (188 aa).

The protein belongs to the UPF0301 (AlgH) family.

The chain is UPF0301 protein XAC2918 from Xanthomonas axonopodis pv. citri (strain 306).